Reading from the N-terminus, the 422-residue chain is D-amino acid dehydrogenase (422 aa).

Residue valine 3–tryptophan 17 participates in FAD binding.

This sequence belongs to the DadA oxidoreductase family. FAD is required as a cofactor.

It catalyses the reaction a D-alpha-amino acid + A + H2O = a 2-oxocarboxylate + AH2 + NH4(+). It functions in the pathway amino-acid degradation; D-alanine degradation; NH(3) and pyruvate from D-alanine: step 1/1. Oxidative deamination of D-amino acids. This is D-amino acid dehydrogenase from Paramagnetospirillum magneticum (strain ATCC 700264 / AMB-1) (Magnetospirillum magneticum).